The chain runs to 212 residues: Peptide methionine sulfoxide reductase MsrA (212 aa).

Cys52 is a catalytic residue.

This sequence belongs to the MsrA Met sulfoxide reductase family.

The catalysed reaction is L-methionyl-[protein] + [thioredoxin]-disulfide + H2O = L-methionyl-(S)-S-oxide-[protein] + [thioredoxin]-dithiol. It carries out the reaction [thioredoxin]-disulfide + L-methionine + H2O = L-methionine (S)-S-oxide + [thioredoxin]-dithiol. In terms of biological role, has an important function as a repair enzyme for proteins that have been inactivated by oxidation. Catalyzes the reversible oxidation-reduction of methionine sulfoxide in proteins to methionine. The polypeptide is Peptide methionine sulfoxide reductase MsrA (Escherichia coli (strain ATCC 8739 / DSM 1576 / NBRC 3972 / NCIMB 8545 / WDCM 00012 / Crooks)).